The chain runs to 372 residues: Phospho-N-acetylmuramoyl-pentapeptide-transferase (372 aa).

The next 10 membrane-spanning stretches (helical) occupy residues 2–22 (LVWL…VSSL), 71–91 (TPTM…LLWA), 98–118 (VWIL…DDWL), 134–154 (YFWL…IATL), 176–196 (MIPF…YFVI), 211–231 (GLAI…AYVS), 251–271 (VIIV…FNAH), 275–295 (VFMG…IAVM), 300–320 (IAFA…MLQV), and 349–369 (QVVA…LMTL).

It belongs to the glycosyltransferase 4 family. MraY subfamily. It depends on Mg(2+) as a cofactor.

The protein localises to the cell inner membrane. It carries out the reaction UDP-N-acetyl-alpha-D-muramoyl-L-alanyl-gamma-D-glutamyl-meso-2,6-diaminopimeloyl-D-alanyl-D-alanine + di-trans,octa-cis-undecaprenyl phosphate = di-trans,octa-cis-undecaprenyl diphospho-N-acetyl-alpha-D-muramoyl-L-alanyl-D-glutamyl-meso-2,6-diaminopimeloyl-D-alanyl-D-alanine + UMP. The protein operates within cell wall biogenesis; peptidoglycan biosynthesis. In terms of biological role, catalyzes the initial step of the lipid cycle reactions in the biosynthesis of the cell wall peptidoglycan: transfers peptidoglycan precursor phospho-MurNAc-pentapeptide from UDP-MurNAc-pentapeptide onto the lipid carrier undecaprenyl phosphate, yielding undecaprenyl-pyrophosphoryl-MurNAc-pentapeptide, known as lipid I. This Psychrobacter cryohalolentis (strain ATCC BAA-1226 / DSM 17306 / VKM B-2378 / K5) protein is Phospho-N-acetylmuramoyl-pentapeptide-transferase.